We begin with the raw amino-acid sequence, 215 residues long: Pyrophosphatase PpaX (215 aa).

The Nucleophile role is filled by D9.

Belongs to the HAD-like hydrolase superfamily. PpaX family. Mg(2+) serves as cofactor.

The catalysed reaction is diphosphate + H2O = 2 phosphate + H(+). Its function is as follows. Hydrolyzes pyrophosphate formed during P-Ser-HPr dephosphorylation by HPrK/P. Might play a role in controlling the intracellular pyrophosphate pool. In Bacillus mycoides (strain KBAB4) (Bacillus weihenstephanensis), this protein is Pyrophosphatase PpaX.